A 252-amino-acid polypeptide reads, in one-letter code: Imidazole glycerol phosphate synthase subunit HisF (252 aa).

Active-site residues include aspartate 11 and aspartate 130.

Belongs to the HisA/HisF family. Heterodimer of HisH and HisF.

It localises to the cytoplasm. It carries out the reaction 5-[(5-phospho-1-deoxy-D-ribulos-1-ylimino)methylamino]-1-(5-phospho-beta-D-ribosyl)imidazole-4-carboxamide + L-glutamine = D-erythro-1-(imidazol-4-yl)glycerol 3-phosphate + 5-amino-1-(5-phospho-beta-D-ribosyl)imidazole-4-carboxamide + L-glutamate + H(+). It functions in the pathway amino-acid biosynthesis; L-histidine biosynthesis; L-histidine from 5-phospho-alpha-D-ribose 1-diphosphate: step 5/9. IGPS catalyzes the conversion of PRFAR and glutamine to IGP, AICAR and glutamate. The HisF subunit catalyzes the cyclization activity that produces IGP and AICAR from PRFAR using the ammonia provided by the HisH subunit. This is Imidazole glycerol phosphate synthase subunit HisF from Bacillus mycoides (strain KBAB4) (Bacillus weihenstephanensis).